Here is a 314-residue protein sequence, read N- to C-terminus: Cytosolic sulfotransferase 3 (314 aa).

A 3'-phosphoadenylyl sulfate-binding site is contributed by 71–76; the sequence is KSGTLW. Histidine 121 serves as the catalytic Proton acceptor. Residues arginine 143, serine 151, tyrosine 209, and 275 to 277 contribute to the 3'-phosphoadenylyl sulfate site; that span reads RKG.

It belongs to the sulfotransferase 1 family.

It localises to the cytoplasm. Functionally, sulfotransferase that utilizes 3'-phospho-5'-adenylyl sulfate (PAPS) as sulfonate donor. The chain is Cytosolic sulfotransferase 3 (SOT3) from Arabidopsis thaliana (Mouse-ear cress).